Consider the following 1860-residue polypeptide: Probable helicase with zinc finger domain (1860 aa).

A C3H1-type zinc finger spans residues 168 to 196 (SEEYTLCKRFLEQGLCRYGAQCTSAHSQE). Position 661–668 (661–668 (GPYGTGKT)) interacts with ATP. A DEAA box motif is present at residues 787–790 (DEAA). Disordered stretches follow at residues 1106–1136 (RSQH…TEPF), 1158–1177 (TPPG…VQRL), 1286–1317 (ERKA…GFPA), 1556–1604 (IQPR…PPDH), 1641–1709 (RQDP…RYPS), and 1749–1860 (MSEE…TYFK). Low complexity predominate over residues 1107 to 1116 (SQHPPQQGPG). Residues 1286 to 1298 (ERKAPELKEKQGD) show a composition bias toward basic and acidic residues. The segment covering 1301–1313 (SVQNKSPEPQSNM) has biased composition (polar residues). A compositionally biased stretch (low complexity) spans 1641–1660 (RQDPGPLQHQQQKQQLQAPQ). 2 stretches are compositionally biased toward pro residues: residues 1760–1769 (QPPPPPPPHP) and 1783–1794 (PLLPSKQTPPDP). The segment covering 1847–1860 (GSSNSSNGYYTYFK) has biased composition (low complexity).

The protein belongs to the DNA2/NAM7 helicase family.

The protein localises to the nucleus. Functionally, may act as a helicase. This Danio rerio (Zebrafish) protein is Probable helicase with zinc finger domain (helz).